The primary structure comprises 145 residues: uncharacterized protein (145 aa).

The first 26 residues, 1–26 (MAILLPLKSILPWCCITFSFLLSSSG), serve as a signal peptide directing secretion.

This is an uncharacterized protein from Saccharomyces cerevisiae (strain ATCC 204508 / S288c) (Baker's yeast).